The following is a 55-amino-acid chain: Large ribosomal subunit protein bL33 (55 aa).

It belongs to the bacterial ribosomal protein bL33 family.

The polypeptide is Large ribosomal subunit protein bL33 (Sinorhizobium fredii (strain NBRC 101917 / NGR234)).